The sequence spans 1410 residues: DNA-directed RNA polymerase subunit beta' (1410 aa).

Zn(2+) is bound by residues Cys70, Cys72, Cys85, and Cys88. Residues Asp460, Asp462, and Asp464 each contribute to the Mg(2+) site. Residues Cys814, Cys888, Cys895, and Cys898 each contribute to the Zn(2+) site.

The protein belongs to the RNA polymerase beta' chain family. In terms of assembly, the RNAP catalytic core consists of 2 alpha, 1 beta, 1 beta' and 1 omega subunit. When a sigma factor is associated with the core the holoenzyme is formed, which can initiate transcription. Mg(2+) is required as a cofactor. Requires Zn(2+) as cofactor.

The enzyme catalyses RNA(n) + a ribonucleoside 5'-triphosphate = RNA(n+1) + diphosphate. Its function is as follows. DNA-dependent RNA polymerase catalyzes the transcription of DNA into RNA using the four ribonucleoside triphosphates as substrates. This is DNA-directed RNA polymerase subunit beta' from Saccharophagus degradans (strain 2-40 / ATCC 43961 / DSM 17024).